The following is a 209-amino-acid chain: Thymidylate kinase (209 aa).

Residue 10–17 (GLDGAGKS) coordinates ATP.

It belongs to the thymidylate kinase family.

It carries out the reaction dTMP + ATP = dTDP + ADP. In terms of biological role, phosphorylation of dTMP to form dTDP in both de novo and salvage pathways of dTTP synthesis. This Francisella tularensis subsp. holarctica (strain FTNF002-00 / FTA) protein is Thymidylate kinase.